The sequence spans 185 residues: Ribosome-recycling factor (185 aa).

Belongs to the RRF family.

The protein localises to the cytoplasm. Responsible for the release of ribosomes from messenger RNA at the termination of protein biosynthesis. May increase the efficiency of translation by recycling ribosomes from one round of translation to another. The protein is Ribosome-recycling factor of Coxiella burnetii (strain CbuK_Q154) (Coxiella burnetii (strain Q154)).